We begin with the raw amino-acid sequence, 1455 residues long: DNA polymerase II large subunit (1455 aa).

The disordered stretch occupies residues 1409–1440 (GLLENLSNGSKKTEKAEKAEKPRKKSDEKPKK). Basic and acidic residues predominate over residues 1419 to 1438 (KKTEKAEKAEKPRKKSDEKP).

The protein belongs to the archaeal DNA polymerase II family. Heterodimer of a large subunit and a small subunit. This protein undergoes a protein self splicing that involves a post-translational excision of the intervening region (intein) followed by peptide ligation.

The catalysed reaction is DNA(n) + a 2'-deoxyribonucleoside 5'-triphosphate = DNA(n+1) + diphosphate. It carries out the reaction Exonucleolytic cleavage in the 3'- to 5'-direction to yield nucleoside 5'-phosphates.. Possesses two activities: a DNA synthesis (polymerase) and an exonucleolytic activity that degrades single-stranded DNA in the 3'- to 5'-direction. Has a template-primer preference which is characteristic of a replicative DNA polymerase. The protein is DNA polymerase II large subunit (polC) of Pyrococcus abyssi (strain GE5 / Orsay).